A 262-amino-acid chain; its full sequence is Putative 1-acyl-sn-glycerol-3-phosphate acyltransferase acl-1 (262 aa).

Transmembrane regions (helical) follow at residues 3-23 (FLAI…PVIG), 29-49 (VYFG…SIPF), and 89-109 (IIIA…AWPV). An HXXXXD motif motif is present at residues 94-99 (HQSALD).

The protein belongs to the 1-acyl-sn-glycerol-3-phosphate acyltransferase family.

The protein resides in the membrane. The enzyme catalyses a 1-acyl-sn-glycero-3-phosphate + an acyl-CoA = a 1,2-diacyl-sn-glycero-3-phosphate + CoA. It functions in the pathway phospholipid metabolism; CDP-diacylglycerol biosynthesis; CDP-diacylglycerol from sn-glycerol 3-phosphate: step 2/3. In terms of biological role, converts lysophosphatidic acid (LPA) into phosphatidic acid by incorporating an acyl moiety at the sn-2 position of the glycerol backbone. This is Putative 1-acyl-sn-glycerol-3-phosphate acyltransferase acl-1 (acl-1) from Caenorhabditis elegans.